The following is a 129-amino-acid chain: Flagellar assembly factor FliW 2 (129 aa).

The protein belongs to the FliW family. In terms of assembly, interacts with translational regulator CsrA and flagellin(s).

It localises to the cytoplasm. Functionally, acts as an anti-CsrA protein, binds CsrA and prevents it from repressing translation of its target genes, one of which is flagellin. Binds to flagellin and participates in the assembly of the flagellum. In Helicobacter pylori (strain HPAG1), this protein is Flagellar assembly factor FliW 2.